The chain runs to 1259 residues: Ankyrin repeat and sterile alpha motif domain-containing protein 1B (1259 aa).

ANK repeat units lie at residues 2-31 (GKDQELLEAARTGNVALVEKLLSGRKGGIL), 58-87 (SGYTALHHAALNGHKDIVLKLLQYEASTNV), 91-120 (KGYFPIHLAAWKGDVEIVKILIHHGPSHSR), 127-156 (ENETALHCAAQYGHSEVVAVLLEELTDPTI), 160-189 (KLETPLDLAALYGRLRVVKMIISAHPNLMS), 193-222 (RKHTPLHLAARNGHKAVVQVLLEAGMDVSC), and 225-254 (EKGSALHEAALFGKVDVVRVLLETGIDANI). Residues 298–325 (HAQEDTAQETHLSSPAESPQKTKSETVT) are disordered. Over residues 306–325 (ETHLSSPAESPQKTKSETVT) the composition is skewed to polar residues. Serine 310, serine 311, serine 315, serine 353, and serine 364 each carry phosphoserine. 4 disordered regions span residues 367–401 (ELGKNGSQSVRTSSTINLSPGEVEDEEEDPNSCGP), 490–513 (PGTSHHRNSSTGPTPDCSPPSPDT), 556–614 (CTSF…GSSP), and 631–661 (TCEDGPDEASLANSPLPFKQTPIENNPEPSV). Residues 371-384 (NGSQSVRTSSTINL) show a composition bias toward polar residues. Threonine 503 is subject to Phosphothreonine. 2 positions are modified to phosphoserine: serine 507 and serine 510. A compositionally biased stretch (low complexity) spans 556 to 574 (CTSFTSSPAASPPTSSVET). Over residues 575-587 (TEVKNEGAEHADD) the composition is skewed to basic and acidic residues. Serine 738 is subject to Phosphoserine. Residues 753–776 (VNWSKSSTAERSSKDNSERTPSFT) are disordered. At threonine 772 the chain carries Phosphothreonine. Residue serine 774 is modified to Phosphoserine. 2 SAM domains span residues 809 to 875 (CPVQ…LPKM) and 883 to 948 (YHPT…RLHD). Tyrosine 900 carries the post-translational modification Phosphotyrosine. Position 934 (histidine 934) is a short sequence motif, nuclear localization signal. Residues 943–988 (GDRLHDDPPQKPPRSITLREPSGNHTPPQLSPSLSQSTYTTGGSLD) form a disordered region. The span at 968 to 983 (TPPQLSPSLSQSTYTT) shows a compositional bias: low complexity. Phosphoserine is present on serine 973. Residue tyrosine 1006 is modified to Phosphotyrosine. A PID domain is found at 1055 to 1212 (IFQSCDYKAF…SFENKPSKPI (158 aa)). Positions 1196–1216 (HSSTLPESFENKPSKPIPKPR) are disordered.

Interacts with EPHA8. Isoform 2 interacts with COIL.

The protein resides in the cytoplasm. The protein localises to the nucleus. It localises to the postsynaptic density. It is found in the cell projection. Its subcellular location is the dendritic spine. Isoform 2 may participate in the regulation of nucleoplasmic coilin protein interactions in neuronal and transformed cells. The sequence is that of Ankyrin repeat and sterile alpha motif domain-containing protein 1B (Anks1b) from Mus musculus (Mouse).